A 1066-amino-acid chain; its full sequence is TBC1 domain family member 31 (1066 aa).

7 WD repeats span residues 33 to 74, 75 to 116, 117 to 157, 158 to 200, 201 to 248, 249 to 296, and 297 to 334; these read HNTS…LHGN, RFNL…TVTK, ELVS…LDTF, QRKR…CDTL, FCKY…ARQL, FRII…MQTC, and KLLF…NIYS. A Rab-GAP TBC domain is found at 424–599; that stretch reads EYPTKYRMFI…KLFDNIFSNH (176 aa). Coiled coils occupy residues 728-861 and 914-948; these read QKQE…DLEE and NKCY…KWKE. Residues 989-998 show a composition bias toward basic and acidic residues; that stretch reads CHKEEPRFQN. The interval 989-1020 is disordered; that stretch reads CHKEEPRFQNEQDSSCLPRTSQLNDSSEMDPS. Positions 999 to 1020 are enriched in polar residues; that stretch reads EQDSSCLPRTSQLNDSSEMDPS. Positions 1053 to 1056 are mediates direct interaction with PJA2; the sequence is RARH.

In terms of assembly, interacts with PJA2; the interaction is direct and recruits PJA2 to centrosomes. Interacts with OFD1; regulates its activity in cilium assembly. Interacts with PRKACA.

The protein localises to the cytoplasm. The protein resides in the cytoskeleton. Its subcellular location is the microtubule organizing center. It localises to the centrosome. It is found in the centriolar satellite. The protein localises to the cilium basal body. Functionally, molecular adapter which is involved in cilium biogenesis. Part of a functional complex including OFD1 a centriolar protein involved in cilium assembly. Could regulate the cAMP-dependent phosphorylation of OFD1, and its subsequent ubiquitination by PJA2 which ultimately leads to its proteasomal degradation. The protein is TBC1 domain family member 31 of Homo sapiens (Human).